The primary structure comprises 247 residues: Ribonuclease 3 (247 aa).

The region spanning 21–149 (FKKLSKKIGI…LVGAIYLDRG (129 aa)) is the RNase III domain. Residue glutamate 62 coordinates Mg(2+). Aspartate 66 is a catalytic residue. Positions 135 and 138 each coordinate Mg(2+). Residue glutamate 138 is part of the active site. The 70-residue stretch at 176–245 (DYKTQLQEYS…AKELYIRIRR (70 aa)) folds into the DRBM domain.

This sequence belongs to the ribonuclease III family. As to quaternary structure, homodimer. Requires Mg(2+) as cofactor.

It is found in the cytoplasm. It catalyses the reaction Endonucleolytic cleavage to 5'-phosphomonoester.. Functionally, digests double-stranded RNA. Involved in the processing of primary rRNA transcript to yield the immediate precursors to the large and small rRNAs (23S and 16S). Processes some mRNAs, and tRNAs when they are encoded in the rRNA operon. Processes pre-crRNA and tracrRNA of type II CRISPR loci if present in the organism. The chain is Ribonuclease 3 from Leptospira borgpetersenii serovar Hardjo-bovis (strain L550).